The chain runs to 155 residues: MSQVILDLQVACEDTTGLPDEAQFQTWLNAVVPQFQEESEVTVRLVDEAESHDLNLTYRGMDKPTNVLSFPFEAPPGIDMPLLGDLIICRQVVEREAREQEKPLEAHWAHMVVHGSLHLLGYDHIEDDEAEEMEGIETEIMLALGFDDPYIAEKA.

3 residues coordinate Zn(2+): H114, H118, and H124.

This sequence belongs to the endoribonuclease YbeY family. The cofactor is Zn(2+).

The protein resides in the cytoplasm. Functionally, single strand-specific metallo-endoribonuclease involved in late-stage 70S ribosome quality control and in maturation of the 3' terminus of the 16S rRNA. This Cronobacter sakazakii (strain ATCC BAA-894) (Enterobacter sakazakii) protein is Endoribonuclease YbeY.